We begin with the raw amino-acid sequence, 254 residues long: DNA-3-methyladenine glycosylase (254 aa).

Basic residues predominate over residues 1 to 10; the sequence is MKTPARRSKR. The disordered stretch occupies residues 1-20; sequence MKTPARRSKRVNQEESETNV.

The protein belongs to the DNA glycosylase MPG family.

Its subcellular location is the nucleus. The catalysed reaction is Hydrolysis of alkylated DNA, releasing 3-methyladenine, 3-methylguanine, 7-methylguanine and 7-methyladenine.. Hydrolysis of the deoxyribose N-glycosidic bond to excise 3-methyladenine, and 7-methylguanine from the damaged DNA polymer formed by alkylation lesions. This chain is DNA-3-methyladenine glycosylase (MAG), found in Arabidopsis thaliana (Mouse-ear cress).